Here is a 385-residue protein sequence, read N- to C-terminus: Leucine aminopeptidase 1 (385 aa).

An N-terminal signal peptide occupies residues 1 to 14 (MKFLTLALSATATA). Positions 15 to 85 (MIIVNPEQQP…YGTLHTTRVV (71 aa)) are excised as a propeptide. Zn(2+) is bound by residues H185, D204, E243, and D270. C319 and C323 form a disulfide bridge. H352 contacts Zn(2+).

The protein belongs to the peptidase M28 family. M28E subfamily. As to quaternary structure, monomer. It depends on Zn(2+) as a cofactor.

Its subcellular location is the secreted. Its function is as follows. Extracellular aminopeptidase that allows assimilation of proteinaceous substrates. This Penicillium rubens (strain ATCC 28089 / DSM 1075 / NRRL 1951 / Wisconsin 54-1255) (Penicillium chrysogenum) protein is Leucine aminopeptidase 1 (lap1).